A 63-amino-acid polypeptide reads, in one-letter code: Large ribosomal subunit protein uL29 (63 aa).

It belongs to the universal ribosomal protein uL29 family.

This chain is Large ribosomal subunit protein uL29, found in Photorhabdus laumondii subsp. laumondii (strain DSM 15139 / CIP 105565 / TT01) (Photorhabdus luminescens subsp. laumondii).